The following is a 177-amino-acid chain: ATP synthase subunit delta (177 aa).

The protein belongs to the ATPase delta chain family. As to quaternary structure, F-type ATPases have 2 components, F(1) - the catalytic core - and F(0) - the membrane proton channel. F(1) has five subunits: alpha(3), beta(3), gamma(1), delta(1), epsilon(1). F(0) has three main subunits: a(1), b(2) and c(10-14). The alpha and beta chains form an alternating ring which encloses part of the gamma chain. F(1) is attached to F(0) by a central stalk formed by the gamma and epsilon chains, while a peripheral stalk is formed by the delta and b chains.

It localises to the cell inner membrane. Its function is as follows. F(1)F(0) ATP synthase produces ATP from ADP in the presence of a proton or sodium gradient. F-type ATPases consist of two structural domains, F(1) containing the extramembraneous catalytic core and F(0) containing the membrane proton channel, linked together by a central stalk and a peripheral stalk. During catalysis, ATP synthesis in the catalytic domain of F(1) is coupled via a rotary mechanism of the central stalk subunits to proton translocation. In terms of biological role, this protein is part of the stalk that links CF(0) to CF(1). It either transmits conformational changes from CF(0) to CF(1) or is implicated in proton conduction. The protein is ATP synthase subunit delta of Herminiimonas arsenicoxydans.